The primary structure comprises 311 residues: 4-hydroxy-tetrahydrodipicolinate synthase (311 aa).

A pyruvate-binding site is contributed by T51. The active-site Proton donor/acceptor is Y140. K168 (schiff-base intermediate with substrate) is an active-site residue. Pyruvate is bound at residue I209.

This sequence belongs to the DapA family. Homotetramer; dimer of dimers.

Its subcellular location is the cytoplasm. The enzyme catalyses L-aspartate 4-semialdehyde + pyruvate = (2S,4S)-4-hydroxy-2,3,4,5-tetrahydrodipicolinate + H2O + H(+). It participates in amino-acid biosynthesis; L-lysine biosynthesis via DAP pathway; (S)-tetrahydrodipicolinate from L-aspartate: step 3/4. Its function is as follows. Catalyzes the condensation of (S)-aspartate-beta-semialdehyde [(S)-ASA] and pyruvate to 4-hydroxy-tetrahydrodipicolinate (HTPA). The polypeptide is 4-hydroxy-tetrahydrodipicolinate synthase (Streptococcus gordonii (strain Challis / ATCC 35105 / BCRC 15272 / CH1 / DL1 / V288)).